The chain runs to 186 residues: MLILLDQDGVLADFEHAFIDAWRKRHPDIEPVAFEERKSFHIREDYAPELRGLAEAIYTAPGFIRDLPPVPGAVEAFRELLALGMDVRICSSPLMQFENCVAEKYLWVERHLGRDATQRLILTRDKTLVQGDLLIDDRPVITGAARPRWRHIIYDAPYNRDQTDRPRLDWRNWRNVLAGELYRSDA.

The active-site Nucleophile is D6. Mg(2+)-binding residues include D6, D8, and D137. D8 (proton donor) is an active-site residue.

This sequence belongs to the 5'(3')-deoxyribonucleotidase family. Mg(2+) serves as cofactor.

Functionally, dephosphorylates the 5' and 2'(3')-phosphates of deoxyribonucleotides. This is Putative 5'(3')-deoxyribonucleotidase from Bordetella pertussis (strain Tohama I / ATCC BAA-589 / NCTC 13251).